Consider the following 376-residue polypeptide: Succinyl-diaminopimelate desuccinylase (376 aa).

Histidine 67 contacts Zn(2+). The active site involves aspartate 69. Aspartate 100 serves as a coordination point for Zn(2+). Glutamate 134 serves as the catalytic Proton acceptor. 3 residues coordinate Zn(2+): glutamate 135, glutamate 163, and histidine 349.

This sequence belongs to the peptidase M20A family. DapE subfamily. In terms of assembly, homodimer. It depends on Zn(2+) as a cofactor. Requires Co(2+) as cofactor.

The catalysed reaction is N-succinyl-(2S,6S)-2,6-diaminopimelate + H2O = (2S,6S)-2,6-diaminopimelate + succinate. It functions in the pathway amino-acid biosynthesis; L-lysine biosynthesis via DAP pathway; LL-2,6-diaminopimelate from (S)-tetrahydrodipicolinate (succinylase route): step 3/3. Catalyzes the hydrolysis of N-succinyl-L,L-diaminopimelic acid (SDAP), forming succinate and LL-2,6-diaminopimelate (DAP), an intermediate involved in the bacterial biosynthesis of lysine and meso-diaminopimelic acid, an essential component of bacterial cell walls. The sequence is that of Succinyl-diaminopimelate desuccinylase from Actinobacillus succinogenes (strain ATCC 55618 / DSM 22257 / CCUG 43843 / 130Z).